Consider the following 286-residue polypeptide: Formamidopyrimidine-DNA glycosylase (286 aa).

Pro-2 (schiff-base intermediate with DNA) is an active-site residue. The active-site Proton donor is the Glu-3. Catalysis depends on Lys-61, which acts as the Proton donor; for beta-elimination activity. Residues His-103, Arg-122, and Arg-164 each contribute to the DNA site. The FPG-type zinc-finger motif lies at 250–284; sequence NAYAQTGEPCGRCGTLIIRESFMNRGSHYCPNCQK. The active-site Proton donor; for delta-elimination activity is the Arg-274.

The protein belongs to the FPG family. As to quaternary structure, monomer. Zn(2+) is required as a cofactor.

It carries out the reaction Hydrolysis of DNA containing ring-opened 7-methylguanine residues, releasing 2,6-diamino-4-hydroxy-5-(N-methyl)formamidopyrimidine.. The enzyme catalyses 2'-deoxyribonucleotide-(2'-deoxyribose 5'-phosphate)-2'-deoxyribonucleotide-DNA = a 3'-end 2'-deoxyribonucleotide-(2,3-dehydro-2,3-deoxyribose 5'-phosphate)-DNA + a 5'-end 5'-phospho-2'-deoxyribonucleoside-DNA + H(+). Its function is as follows. Involved in base excision repair of DNA damaged by oxidation or by mutagenic agents. Acts as a DNA glycosylase that recognizes and removes damaged bases. Has a preference for oxidized purines, such as 7,8-dihydro-8-oxoguanine (8-oxoG). Has AP (apurinic/apyrimidinic) lyase activity and introduces nicks in the DNA strand. Cleaves the DNA backbone by beta-delta elimination to generate a single-strand break at the site of the removed base with both 3'- and 5'-phosphates. In Corynebacterium glutamicum (strain ATCC 13032 / DSM 20300 / JCM 1318 / BCRC 11384 / CCUG 27702 / LMG 3730 / NBRC 12168 / NCIMB 10025 / NRRL B-2784 / 534), this protein is Formamidopyrimidine-DNA glycosylase.